Here is a 480-residue protein sequence, read N- to C-terminus: Outer capsid protein VP5 (480 aa).

The interval 1-48 is involved in membrane permeabilization; it reads MTSKRLGARFPGFLNRIGSGITRAARSDTTKRIPSAAGRAVERVAASE.

Belongs to the orbivirus VP5 family.

The protein resides in the virion. VP5 protein is one of the two proteins (with VP2) which constitute the virus particle outer capsid. Acts as a membrane permeabilization protein that mediates release of viral particles from endosomal compartments into the cytoplasm. Permeabilization activity is probably negatively regulated by VP2 and is triggered by endosomal degradation of VP2 and exposure to low pH. The sequence is that of Outer capsid protein VP5 (Segment-6) from Ixodes (gulls).